The chain runs to 355 residues: Alanine racemase (355 aa).

Catalysis depends on lysine 34, which acts as the Proton acceptor; specific for D-alanine. N6-(pyridoxal phosphate)lysine is present on lysine 34. Residue arginine 133 participates in substrate binding. Catalysis depends on tyrosine 249, which acts as the Proton acceptor; specific for L-alanine. Methionine 297 serves as a coordination point for substrate.

It belongs to the alanine racemase family. It depends on pyridoxal 5'-phosphate as a cofactor.

It carries out the reaction L-alanine = D-alanine. The protein operates within amino-acid biosynthesis; D-alanine biosynthesis; D-alanine from L-alanine: step 1/1. Catalyzes the interconversion of L-alanine and D-alanine. May also act on other amino acids. This chain is Alanine racemase (alr), found in Rickettsia africae (strain ESF-5).